Here is a 328-residue protein sequence, read N- to C-terminus: MKWYPWLIKPYKKIIRLHERKKAHHAILIKTQKGMGVFKLVWFISKWLLCLKPKGTNFCDNCHGCKLMSANNHPDWHTIINEKNDVFDVDSIRVINEKIFKRAQQGNNKIIFLPNVHKLTESAVNALLKILEEPPEKNWFFLIDYNYLKLHSTLKSRCFLYRLPLPLEKESLNWLKNNNKKDNISNLTSLRINQDSPISAKNFIESDLWDERKNLYKSLSHSIKDKNLLKILPVLCKKNTIMKIDWICLLLFDAVKTNFNERKKLINCDQIKLINFFSKKYNNILLNKSIRKWTKCRYILSSVSSINSELLLLEQLLLWEKILCFITP.

In terms of assembly, DNA polymerase III contains a core (composed of alpha, epsilon and theta chains) that associates with a tau subunit. This core dimerizes to form the POLIII' complex. PolIII' associates with the gamma complex (composed of gamma, delta, delta', psi and chi chains) and with the beta chain to form the complete DNA polymerase III complex.

It carries out the reaction DNA(n) + a 2'-deoxyribonucleoside 5'-triphosphate = DNA(n+1) + diphosphate. Functionally, DNA polymerase III is a complex, multichain enzyme responsible for most of the replicative synthesis in bacteria. This DNA polymerase also exhibits 3' to 5' exonuclease activity. This chain is DNA polymerase III subunit delta' (holB), found in Buchnera aphidicola subsp. Schizaphis graminum (strain Sg).